An 88-amino-acid polypeptide reads, in one-letter code: Apolipoprotein C-I (88 aa).

The N-terminal stretch at 1 to 26 is a signal peptide; that stretch reads MRLFLSLPVWVAVLAMVLEGPAPAQA.

It belongs to the apolipoprotein C1 family.

Its subcellular location is the secreted. In terms of biological role, inhibitor of lipoprotein binding to the low density lipoprotein (LDL) receptor, LDL receptor-related protein, and very low density lipoprotein (VLDL) receptor. Associates with high density lipoproteins (HDL) and the triacylglycerol-rich lipoproteins in the plasma and makes up about 10% of the protein of the VLDL and 2% of that of HDL. Appears to interfere directly with fatty acid uptake and is also the major plasma inhibitor of cholesteryl ester transfer protein (CETP). Binds free fatty acids and reduces their intracellular esterification. Modulates the interaction of APOE with beta-migrating VLDL and inhibits binding of beta-VLDL to the LDL receptor-related protein. The protein is Apolipoprotein C-I (APOC1) of Ursus maritimus (Polar bear).